Reading from the N-terminus, the 119-residue chain is NADH-quinone oxidoreductase subunit A (119 aa).

The next 3 membrane-spanning stretches (helical) occupy residues 9 to 29 (VLLF…LGYV), 63 to 83 (LVAI…PWAV), and 88 to 108 (VGMT…VGFA).

Belongs to the complex I subunit 3 family. In terms of assembly, NDH-1 is composed of 14 different subunits. Subunits NuoA, H, J, K, L, M, N constitute the membrane sector of the complex.

The protein resides in the cell inner membrane. The catalysed reaction is a quinone + NADH + 5 H(+)(in) = a quinol + NAD(+) + 4 H(+)(out). Its function is as follows. NDH-1 shuttles electrons from NADH, via FMN and iron-sulfur (Fe-S) centers, to quinones in the respiratory chain. The immediate electron acceptor for the enzyme in this species is believed to be ubiquinone. Couples the redox reaction to proton translocation (for every two electrons transferred, four hydrogen ions are translocated across the cytoplasmic membrane), and thus conserves the redox energy in a proton gradient. This is NADH-quinone oxidoreductase subunit A from Paracidovorax citrulli (strain AAC00-1) (Acidovorax citrulli).